Here is a 1839-residue protein sequence, read N- to C-terminus: DNA-directed RNA polymerase II subunit RPB1 (1839 aa).

Zn(2+)-binding residues include Cys-66, Cys-69, Cys-76, His-79, Cys-106, Cys-109, and Cys-147. The interval 152 to 174 (DIDDVQSHSTDEPVKKSRGGCGA) is disordered. Over residues 156–166 (VQSHSTDEPVK) the composition is skewed to basic and acidic residues. Cys-172 serves as a coordination point for Zn(2+). Residues 326–397 (TQKSGRPIKS…PETVTPYNIE (72 aa)) mediate DNA binding. Asp-495, Asp-497, and Asp-499 together coordinate Mg(2+). The tract at residues 785 to 795 (GQQNVEGKRIP) is alpha-amanitin binding. The tract at residues 829–841 (PQEFFFHAMGGRE) is bridging helix. Positions 1538 to 1726 (PSSSPGYSPS…PSYGPTSPSY (189 aa)) are enriched in low complexity. The segment at 1538-1839 (PSSSPGYSPS…DASKDDKGNP (302 aa)) is disordered. Tandem repeats lie at residues 1544–1550 (YSPSSPG), 1551–1557 (YSPTSPG), 1558–1564 (YSPTSPG), 1565–1571 (YSPTSPG), 1572–1578 (YSPTSPT), 1579–1585 (YSPSSPG), 1586–1592 (YSPTSPA), 1593–1599 (YSPTSPS), 1600–1606 (YSPTSPS), 1607–1613 (YSPTSPS), 1614–1620 (YSPTSPS), 1621–1627 (YSPTSPS), 1628–1634 (YSPTSPS), 1635–1641 (YSPTSPA), 1642–1648 (YSPTSPA), 1649–1655 (YSPTSPA), 1656–1662 (YSPTSPS), 1663–1669 (YSPTSPS), 1670–1676 (YSPTSPS), 1677–1683 (YSPTSPS), 1684–1690 (YSPTSPS), 1691–1697 (YSPTSPA), 1698–1704 (YSPTSPG), 1705–1711 (YSPTSPS), 1712–1718 (YSPTSPS), 1719–1725 (YGPTSPS), and 1726–1732 (YNPQSAK). Positions 1544–1813 (YSPSSPGYSP…LPGYSPSSTG (270 aa)) are C-terminal domain (CTD); 37 X 7 AA tandem approximate repeats of Y-[GNS]-P-[QST]-[LNS]-[APT]-[AGKNRSTY]. Residues 1727 to 1745 (NPQSAKYSPSIAYSPSNAR) are compositionally biased toward polar residues. One copy of the 28; approximate repeat lies at 1733-1738 (YSPSIA). Repeat copies occupy residues 1739 to 1745 (YSPSNAR), 1752 to 1758 (YSPTSPN), 1759 to 1765 (YSPTSPS), 1766 to 1772 (YSPTSPS), 1773 to 1779 (YSPSSPT), and 1780 to 1786 (YSPSSPY). Residues 1747–1798 (SPASPYSPTSPNYSPTSPSYSPTSPSYSPSSPTYSPSSPYSSGASPDYSPSA) are compositionally biased toward low complexity. A 35; approximate repeat occupies 1794–1799 (YSPSAG). Repeat copies occupy residues 1800 to 1806 (YSPTLPG) and 1807 to 1813 (YSPSSTG). Basic and acidic residues predominate over residues 1818–1839 (HEGDKKDKTGKKDASKDDKGNP).

This sequence belongs to the RNA polymerase beta' chain family. In terms of assembly, component of the RNA polymerase II (Pol II) complex consisting of at least 12 subunits. Interacts with RDM1. Interacts (via CTD) with PRP40A, PRP40B, PRP40C and CYP59. Interacts with MEE12/CCG1 and MEE14/CBP1. Binds (via CTD) to ATX1, especially when phosphorylated on 'Ser-5' of the heptapeptide repeat. The tandem 7 residues repeats in the C-terminal domain (CTD) can be highly phosphorylated. The phosphorylation activates Pol II. Phosphorylation occurs mainly at residues 'Ser-2' and 'Ser-5' of the heptapeptide repeat. The phosphorylation state is believed to result from the balanced action of site-specific CTD kinases and phosphatase, and a 'CTD code' that specifies the position of Pol II within the transcription cycle has been proposed. ATX1 seems to regulate phosphorylation statment. 'Ser-2' and 'Ser-5' phosphorylation are repressed by flavopiridol (Flap) and seliciclib (Selic), inhibitors of CDK7 and CDK9.

The protein resides in the nucleus. It catalyses the reaction RNA(n) + a ribonucleoside 5'-triphosphate = RNA(n+1) + diphosphate. In terms of biological role, DNA-dependent RNA polymerase catalyzes the transcription of DNA into RNA using the four ribonucleoside triphosphates as substrates. Largest and catalytic component of RNA polymerase II which synthesizes mRNA precursors and many functional non-coding RNAs. Forms the polymerase active center together with the second largest subunit. Pol II is the central component of the basal RNA polymerase II transcription machinery. It is composed of mobile elements that move relative to each other. NRPB1 is part of the core element with the central large cleft, the clamp element that moves to open and close the cleft and the jaws that are thought to grab the incoming DNA template. At the start of transcription, a single-stranded DNA template strand of the promoter is positioned within the central active site cleft of Pol II. A bridging helix emanates from NRPB1 and crosses the cleft near the catalytic site and is thought to promote translocation of Pol II by acting as a ratchet that moves the RNA-DNA hybrid through the active site by switching from straight to bent conformations at each step of nucleotide addition. During transcription elongation, Pol II moves on the template as the transcript elongates. Elongation is influenced by the phosphorylation status of the C-terminal domain (CTD) of Pol II largest subunit (NRPB1), which serves as a platform for assembly of factors that regulate transcription initiation, elongation, termination and mRNA processing. The polypeptide is DNA-directed RNA polymerase II subunit RPB1 (Arabidopsis thaliana (Mouse-ear cress)).